The chain runs to 26 residues: 83 kDa hypersensitivity protein (26 aa).

The segment at 1 to 26 (FTPEDFISAPRRGEAIPDPKGELAVF) is disordered. Residues 11–26 (RRGEAIPDPKGELAVF) show a composition bias toward basic and acidic residues.

The polypeptide is 83 kDa hypersensitivity protein (Trichophyton tonsurans (Scalp ringworm fungus)).